A 122-amino-acid polypeptide reads, in one-letter code: Protein POLR1D, isoform 2 (122 aa).

M1 carries the post-translational modification N-acetylmethionine. Positions 48 to 122 (INTIKNTLPS…DKYEKRSNRR (75 aa)) are disordered. Residues 57–83 (SHKEQDHEQKEGDKEPAKSQAQKEENP) are compositionally biased toward basic and acidic residues. Basic residues predominate over residues 84–96 (KKHRSHPYKHSFR). S104 carries the post-translational modification Phosphoserine. The segment covering 110–122 (SSQDKYEKRSNRR) has biased composition (basic and acidic residues).

The chain is Protein POLR1D, isoform 2 (POLR1D) from Homo sapiens (Human).